We begin with the raw amino-acid sequence, 465 residues long: MPETNGTEADSSGPRPGLRLELQAIDLDRDGHGLARWQGWVVVVPGLLPGERAKVQLQQRQKSRWLSRISERLDSSPTRRRPPCILAQDCGGCTLQHLEESAQRNWKQNQLHQTMLRLGGIDHPQAPALTDQRGLGYRNRGLIPLRRGEDDRLRMGYFRRGSHRIVNLSRCPVLDPRLDALVEPLKQDLDTSGLSADHDLSHSQGLRHLGLRIGHHTGEVLITVVSSQQLPALQRLAQQWIERWDPVKGVTLNLQPRRTNQILGATTTVLAGAPTIRELFCGLQLQLSTTTFFQINTPQAERIVACIVSWLSQAELAGPIVDAYCGIGTISLPLAAQGHHVVGLEINPDSIDQARSNADANGLGARTEFQAGDVANLLKETLATCSALVVDPPRRGLESSVIEAILSDPPGLLAYLSCDMATQARDLKRLLQPEGPYRLEQLQPVDFFPQTTHLENLAFLRRVSS.

Residues 13–71 form the TRAM domain; the sequence is GPRPGLRLELQAIDLDRDGHGLARWQGWVVVVPGLLPGERAKVQLQQRQKSRWLSRISE. [4Fe-4S] cluster is bound by residues Cys-84, Cys-90, Cys-93, and Cys-171. S-adenosyl-L-methionine contacts are provided by Gln-294, Tyr-324, Glu-345, and Asp-391. The active-site Nucleophile is Cys-418.

Belongs to the class I-like SAM-binding methyltransferase superfamily. RNA M5U methyltransferase family.

This is an uncharacterized protein from Parasynechococcus marenigrum (strain WH8102).